A 452-amino-acid polypeptide reads, in one-letter code: Exodeoxyribonuclease 7 large subunit (452 aa).

Belongs to the XseA family. As to quaternary structure, heterooligomer composed of large and small subunits.

It localises to the cytoplasm. It carries out the reaction Exonucleolytic cleavage in either 5'- to 3'- or 3'- to 5'-direction to yield nucleoside 5'-phosphates.. Bidirectionally degrades single-stranded DNA into large acid-insoluble oligonucleotides, which are then degraded further into small acid-soluble oligonucleotides. The polypeptide is Exodeoxyribonuclease 7 large subunit (Bacillus cereus (strain G9842)).